The following is a 290-amino-acid chain: ATP synthase gamma chain (290 aa).

This sequence belongs to the ATPase gamma chain family. F-type ATPases have 2 components, CF(1) - the catalytic core - and CF(0) - the membrane proton channel. CF(1) has five subunits: alpha(3), beta(3), gamma(1), delta(1), epsilon(1). CF(0) has three main subunits: a, b and c.

It localises to the cell membrane. Functionally, produces ATP from ADP in the presence of a proton gradient across the membrane. The gamma chain is believed to be important in regulating ATPase activity and the flow of protons through the CF(0) complex. This chain is ATP synthase gamma chain, found in Wolbachia sp. subsp. Brugia malayi (strain TRS).